The sequence spans 330 residues: 5-dehydro-2-deoxygluconokinase (330 aa).

It belongs to the carbohydrate kinase PfkB family.

The enzyme catalyses 5-dehydro-2-deoxy-D-gluconate + ATP = 6-phospho-5-dehydro-2-deoxy-D-gluconate + ADP + H(+). It participates in polyol metabolism; myo-inositol degradation into acetyl-CoA; acetyl-CoA from myo-inositol: step 5/7. In terms of biological role, catalyzes the phosphorylation of 5-dehydro-2-deoxy-D-gluconate (2-deoxy-5-keto-D-gluconate or DKG) to 6-phospho-5-dehydro-2-deoxy-D-gluconate (DKGP). The protein is 5-dehydro-2-deoxygluconokinase of Bacillus velezensis (strain DSM 23117 / BGSC 10A6 / LMG 26770 / FZB42) (Bacillus amyloliquefaciens subsp. plantarum).